Consider the following 165-residue polypeptide: Small ribosomal subunit protein uS13 (165 aa).

A disordered region spans residues 139–165 (GMTIGVARKKAAQPQSQQSSSQQQKSS). Low complexity predominate over residues 153–165 (QSQQSSSQQQKSS).

Belongs to the universal ribosomal protein uS13 family. In terms of assembly, part of the 30S ribosomal subunit. Forms a loose heterodimer with protein S19. Forms two bridges to the 50S subunit in the 70S ribosome.

Functionally, located at the top of the head of the 30S subunit, it contacts several helices of the 16S rRNA. In the 70S ribosome it contacts the 23S rRNA (bridge B1a) and protein L5 of the 50S subunit (bridge B1b), connecting the 2 subunits; these bridges are implicated in subunit movement. This is Small ribosomal subunit protein uS13 from Saccharolobus solfataricus (strain ATCC 35092 / DSM 1617 / JCM 11322 / P2) (Sulfolobus solfataricus).